The following is an 891-amino-acid chain: UPF0182 protein Glov_0814 (891 aa).

The next 7 membrane-spanning stretches (helical) occupy residues 6–26, 51–71, 102–122, 164–184, 202–222, 244–264, and 266–286; these read LTPI…LLAY, GIGV…LLYA, IGVL…ALQW, FMLL…GGIA, ILLA…GFGL, TLTT…FGLW, and GTWR…MIGM.

This sequence belongs to the UPF0182 family.

The protein localises to the cell membrane. The chain is UPF0182 protein Glov_0814 from Trichlorobacter lovleyi (strain ATCC BAA-1151 / DSM 17278 / SZ) (Geobacter lovleyi).